Consider the following 330-residue polypeptide: Ribosomal RNA small subunit methyltransferase C (330 aa).

Belongs to the methyltransferase superfamily. RsmC family. Monomer.

The protein localises to the cytoplasm. The catalysed reaction is guanosine(1207) in 16S rRNA + S-adenosyl-L-methionine = N(2)-methylguanosine(1207) in 16S rRNA + S-adenosyl-L-homocysteine + H(+). Specifically methylates the guanine in position 1207 of 16S rRNA in the 30S particle. The sequence is that of Ribosomal RNA small subunit methyltransferase C from Haemophilus influenzae (strain ATCC 51907 / DSM 11121 / KW20 / Rd).